Here is a 420-residue protein sequence, read N- to C-terminus: Argininosuccinate synthase (420 aa).

23–31 contacts ATP; that stretch reads AYSGGLDTS. Tyr-102 contacts L-citrulline. Position 132 (Gly-132) interacts with ATP. L-aspartate-binding residues include Thr-134, Asn-138, and Asp-139. Residue Asn-138 coordinates L-citrulline. 4 residues coordinate L-citrulline: Arg-142, Ser-190, Glu-274, and Tyr-286.

This sequence belongs to the argininosuccinate synthase family. Type 1 subfamily. As to quaternary structure, homotetramer.

It is found in the cytoplasm. The catalysed reaction is L-citrulline + L-aspartate + ATP = 2-(N(omega)-L-arginino)succinate + AMP + diphosphate + H(+). It functions in the pathway amino-acid biosynthesis; L-arginine biosynthesis; L-arginine from L-ornithine and carbamoyl phosphate: step 2/3. The sequence is that of Argininosuccinate synthase from Renibacterium salmoninarum (strain ATCC 33209 / DSM 20767 / JCM 11484 / NBRC 15589 / NCIMB 2235).